The sequence spans 543 residues: Ipecac alkaloid beta-glucosidase 3 (543 aa).

A beta-D-glucoside contacts are provided by residues Gln-36, His-140, 185-186 (NE), Tyr-350, Glu-422, Trp-471, and Phe-487. The active-site Proton donor is the Glu-186. The active-site Nucleophile is the Glu-422.

Belongs to the glycosyl hydrolase 1 family.

Its subcellular location is the cytoplasm. The protein resides in the cytosol. It catalyses the reaction deacetylipecoside + H2O = deacetylipecoside aglycone + D-glucose. The enzyme catalyses deacetylisoipecoside + H2O = deacetylisoipecoside aglycone + D-glucose. It functions in the pathway alkaloid biosynthesis. Its function is as follows. Beta-glucosidase catalyzing deglucosylation on N-deacetylisoipecoside and N-deacetylipecoside. This is Ipecac alkaloid beta-glucosidase 3 from Carapichea ipecacuanha (Ipecac).